A 507-amino-acid chain; its full sequence is Wax ester synthase/diacylglycerol acyltransferase 5 (507 aa).

The Cytoplasmic portion of the chain corresponds to 1–211 (MEIKIRRRRG…LKTSSRCYSR (211 aa)). The active-site Proton acceptor is His161. The helical transmembrane segment at 212–232 (FFWLVMVLWSAALLVLNTVCD) threads the bilayer. The Lumenal portion of the chain corresponds to 233 to 507 (ALEFIATALF…VVVQERTSTQ (275 aa)). 2 N-linked (GlcNAc...) asparagine glycosylation sites follow: Asn314 and Asn421.

The protein in the N-terminal section; belongs to the long-chain O-acyltransferase family. In terms of tissue distribution, mostly expressed in flowers and siliques.

It localises to the cell membrane. The protein resides in the endoplasmic reticulum membrane. It catalyses the reaction a long chain fatty alcohol + a fatty acyl-CoA = a wax ester + CoA. It carries out the reaction an acyl-CoA + a 1,2-diacyl-sn-glycerol = a triacyl-sn-glycerol + CoA. It participates in glycerolipid metabolism; triacylglycerol biosynthesis. It functions in the pathway lipid metabolism. Its function is as follows. Bifunctional wax ester synthase/diacylglycerol acyltransferase. Involved in cuticular wax biosynthesis. The chain is Wax ester synthase/diacylglycerol acyltransferase 5 from Arabidopsis thaliana (Mouse-ear cress).